Reading from the N-terminus, the 269-residue chain is 5'-nucleotidase SurE (269 aa).

A divalent metal cation contacts are provided by aspartate 11, aspartate 12, serine 43, and asparagine 101.

This sequence belongs to the SurE nucleotidase family. It depends on a divalent metal cation as a cofactor.

It is found in the cytoplasm. It carries out the reaction a ribonucleoside 5'-phosphate + H2O = a ribonucleoside + phosphate. In terms of biological role, nucleotidase that shows phosphatase activity on nucleoside 5'-monophosphates. This is 5'-nucleotidase SurE from Prochlorococcus marinus (strain MIT 9313).